The following is a 108-amino-acid chain: Tetrahydromethanopterin S-methyltransferase subunit B (108 aa).

Residues 79–99 (GMFFGFWVTMAILVLVTILAV) traverse the membrane as a helical segment.

Belongs to the MtrB family. The complex is composed of 8 subunits; MtrA, MtrB, MtrC, MtrD, MtrE, MtrF, MtrG and MtrH.

It is found in the cell membrane. It carries out the reaction 5-methyl-5,6,7,8-tetrahydromethanopterin + coenzyme M + 2 Na(+)(in) = 5,6,7,8-tetrahydromethanopterin + methyl-coenzyme M + 2 Na(+)(out). Its pathway is one-carbon metabolism; methanogenesis from CO(2); methyl-coenzyme M from 5,10-methylene-5,6,7,8-tetrahydromethanopterin: step 2/2. Its function is as follows. Part of a complex that catalyzes the formation of methyl-coenzyme M and tetrahydromethanopterin from coenzyme M and methyl-tetrahydromethanopterin. This is an energy-conserving, sodium-ion translocating step. The sequence is that of Tetrahydromethanopterin S-methyltransferase subunit B from Methanococcus maripaludis (strain C5 / ATCC BAA-1333).